A 161-amino-acid polypeptide reads, in one-letter code: Glycine cleavage system H protein 3 (161 aa).

In terms of domain architecture, Lipoyl-binding spans 40-122 (TVTLGLTDVG…YGDAWIVKIK (83 aa)). Lys-81 is subject to N6-lipoyllysine.

It belongs to the GcvH family. As to quaternary structure, the glycine cleavage system is composed of four proteins: P, T, L and H. It depends on (R)-lipoate as a cofactor.

Functionally, the glycine cleavage system catalyzes the degradation of glycine. The H protein shuttles the methylamine group of glycine from the P protein to the T protein. This Aquifex aeolicus (strain VF5) protein is Glycine cleavage system H protein 3.